Reading from the N-terminus, the 408-residue chain is MAEPVGKRGRLSRGSGAGRRPRAQRSPSRGTLDVVSVDLVSDSDEEIVEVTSARCAADEVEVAPSEPPGPVASRDDSDSDSEGADARPAGPPREPVRRRRRLVLDPGEAPLVPVYSGKVKSSLCLIPDDLSLLKLYPPGDEEEVELADSSGLYHEGSPSPGSPWKTKLRTKDKEEKKKTEILDLDNSPLSPPSPRTKSRKHTRALKKLSEVNKRLQDLRSCLSPEPPQGQEQQGQEDEVVLVEGPTLPETPRLFPLKIRCRADLVRLPLRMSEPLQSVVDHMATHLGVSPSRILLLFGETELSPTATPRTLKLGVADIIDCVVLASSPEATETSRQLQLRVQGKEKHQTLEVSLSRDSPLKTLMSHYEEAMGLSGRKLSFFFDGTKLSGRELPADLGMESGDLIEVWG.

The segment at 1 to 113 (MAEPVGKRGR…LDPGEAPLVP (113 aa)) is disordered. The span at 24–40 (QRSPSRGTLDVVSVDLV) shows a compositional bias: low complexity. A phosphoserine mark is found at Ser-41, Ser-43, Ser-73, Ser-77, Ser-79, Ser-81, and Ser-116. Glycyl lysine isopeptide (Lys-Gly) (interchain with G-Cter in SUMO2) cross-links involve residues Lys-118 and Lys-120. The interval 141-205 (EEEVELADSS…TKSRKHTRAL (65 aa)) is disordered. Positions 169 to 181 (RTKDKEEKKKTEI) are enriched in basic and acidic residues. Phosphoserine is present on residues Ser-187, Ser-190, and Ser-193. Positions 196–205 (TKSRKHTRAL) are enriched in basic residues. Residues 197-220 (KSRKHTRALKKLSEVNKRLQDLRS) are a coiled coil. Ser-209 and Ser-303 each carry phosphoserine. Thr-305 and Thr-307 each carry phosphothreonine. The region spanning 337–408 (LQLRVQGKEK…ESGDLIEVWG (72 aa)) is the Ubiquitin-like domain. Phosphoserine is present on residues Ser-358 and Ser-379.

In terms of assembly, interacts with NFATC2, TRAF1, TRAF2 and PRMT1. Interacts with UBE2I/UBC9. Post-translationally, methylation at the N-terminus by PRMT1 modulates interaction with the NFAT complex and results in augmented cytokine production.

It is found in the nucleus. Its subcellular location is the cytoplasm. In terms of biological role, in T-helper 2 (Th2) cells, regulates the magnitude of NFAT-driven transcription of a specific subset of cytokine genes, including IL3, IL4, IL5 and IL13, but not IL2. Recruits PRMT1 to the IL4 promoter; this leads to enhancement of histone H4 'Arg-3'-methylation and facilitates subsequent histone acetylation at the IL4 locus, thus promotes robust cytokine expression. Down-regulates formation of poly-SUMO chains by UBE2I/UBC9. The sequence is that of NFATC2-interacting protein (NFATC2IP) from Macaca fascicularis (Crab-eating macaque).